Reading from the N-terminus, the 427-residue chain is Galactose-3-O-sulfotransferase 3 (427 aa).

Over M1–I19 the chain is Cytoplasmic. A helical; Signal-anchor for type II membrane protein membrane pass occupies residues L20–S40. The Lumenal portion of the chain corresponds to W41 to H427. Residues N90, N109, N176, and N301 are each glycosylated (N-linked (GlcNAc...) asparagine). The tract at residues M404–H427 is disordered.

This sequence belongs to the galactose-3-O-sulfotransferase family. It depends on Mg(2+) as a cofactor.

The protein resides in the golgi apparatus. It is found in the golgi stack membrane. It participates in protein modification; carbohydrate sulfation. In terms of biological role, transfers a sulfate to position 3 of non-reducing beta-galactosyl residues in N-glycans and core2-branched O-glycans. Has high activity towards Gal-beta-1,4-GlcNAc, Gal-beta-1,4(Fuc-alpha-1,3)GlcNAc and lower activity towards Gal-beta-1,3(Fuc-alpha-1,4)GlcNAc. This is Galactose-3-O-sulfotransferase 3 (GAL3ST3) from Bos taurus (Bovine).